Consider the following 333-residue polypeptide: uncharacterized protein (333 aa).

One can recognise a Fe/B12 periplasmic-binding domain in the interval 45-318 (NVIVSDSMFI…EYVKIIHPKI (274 aa)).

This is an uncharacterized protein from Methanocaldococcus jannaschii (strain ATCC 43067 / DSM 2661 / JAL-1 / JCM 10045 / NBRC 100440) (Methanococcus jannaschii).